We begin with the raw amino-acid sequence, 541 residues long: Synaptotagmin-1 (541 aa).

Residues 1-11 (MGFFSTILGFC) are Extracellular-facing. The helical transmembrane segment at 12-32 (GFGVGISLGLVIGYVLFVYLL) threads the bilayer. The Cytoplasmic segment spans residues 33–541 (PNDVKDPEIR…QIELEWRTAS (509 aa)). Positions 67 to 249 (DFDRVDWINR…WPKTLVVPIL (183 aa)) constitute an SMP-LTD domain. The tract at residues 227–509 (QEQIKDQVAN…TLGYVDIPVV (283 aa)) is phospholipid binding. C2 domains follow at residues 240–362 (WPKT…AFTL) and 401–521 (GFEE…NQKF). 4 residues coordinate Ca(2+): Asp-276, Asp-282, Asp-332, and Glu-334.

Belongs to the synaptotagmin family. As to quaternary structure, interacts with cabbage leaf curl virus (CaLCuV) BC1 protein and tobacco mosaic virus (TMV) MP protein. Interacts with ROSY1. It depends on Ca(2+) as a cofactor. As to expression, expressed in roots, shoots, rosette and cauline leaves, inflorescences, and siliques. In roots, expressed in vascular bundle, epidermis, the differential zone of the tips of root hairs, and the quiescent center and columella of root tips.

The protein resides in the cell membrane. Its subcellular location is the endosome membrane. In terms of biological role, plays an important role in maintaining plasma membrane integrity during freezing and osmotic stresses. May function in membrane resealing during calcium-dependent freezing tolerance. May regulate endocytosis and endosome recycling at the plasma membrane and cell-to-cell trafficking of cabbage leaf curl virus (CaLCuV) and tobacco mosaic virus (TMV) movement proteins via plasmodesmata. In Arabidopsis thaliana (Mouse-ear cress), this protein is Synaptotagmin-1 (SYT1).